The primary structure comprises 271 residues: Na(+), Li(+), K(+)/H(+) antiporter subunit B (271 aa).

7 helical membrane-spanning segments follow: residues 2 to 22, 36 to 56, 94 to 114, 130 to 150, 152 to 172, 193 to 213, and 216 to 236; these read ILLT…AIIF, LPQV…FLVG, WVYL…PSLI, PFML…LGTW, IVMG…VIIQ, STIT…SIPG, and ALMD…ITVM. The disordered stretch occupies residues 252–271; it reads TPHLSYSKAPPPSKGDNNAL.

The protein belongs to the UmpA/UmpB family. In terms of assembly, heterodimer composed of UmpA and UmpB.

The protein localises to the cell membrane. Part of a two-component antiporter that catalyzes the efflux of Na(+), Li(+) and K(+) in exchange for external protons. Shows a preference for Na(+), followed by K(+) and Li(+). The chain is Na(+), Li(+), K(+)/H(+) antiporter subunit B from Vreelandella zhaodongensis (Halomonas zhaodongensis).